Here is a 74-residue protein sequence, read N- to C-terminus: Ferredoxin MycCII (74 aa).

Positions 1-29 (MRIVLDAERCVGAGQCEATAPELFTQGDD) constitute a 4Fe-4S ferredoxin-type domain. Residues C10, C16, and C54 each contribute to the [3Fe-4S] cluster site.

The cofactor is [3Fe-4S] cluster.

The protein operates within antibiotic biosynthesis; mycinamicin biosynthesis. Its function is as follows. Specific electron transport protein capable of effectively supporting cytochrome P450 MycCI activity in the biosynthesis of mycinamicin, a 16-membered macrolide antibiotic. The polypeptide is Ferredoxin MycCII (Micromonospora griseorubida).